Here is a 318-residue protein sequence, read N- to C-terminus: Basic leucine zipper (bZIP) transcription factor atfB (318 aa).

The disordered stretch occupies residues 114-157; sequence FNSSPPEYAPPKHRSSLSEQSQTDGYGVSTRRRKASAIDQCEQQ. Residues 160-199 are basic motif; that stretch reads REKREKFLERNRLAASKCRQKKKEHTKLLETRFREVSNKK. The bZIP domain maps to 160-223; that stretch reads REKREKFLER…LNLKNEMLRH (64 aa). The interval 202–216 is leucine-zipper; it reads LESEIEHLRSEVLNL. Positions 275 to 301 are disordered; the sequence is DGPMQLPSEMGSPLDQRRDSEQSIMTE.

It belongs to the bZIP family. ATF subfamily.

The protein localises to the nucleus. Its function is as follows. Transcription factor that acts as a key player in the regulatory circuit that integrates secondary metabolism and cellular response to oxidative stress. Regulates the genes involved in development and stress response through direct binding to their promoters. This chain is Basic leucine zipper (bZIP) transcription factor atfB, found in Aspergillus flavus (strain ATCC 200026 / FGSC A1120 / IAM 13836 / NRRL 3357 / JCM 12722 / SRRC 167).